Reading from the N-terminus, the 142-residue chain is Large-conductance mechanosensitive channel (142 aa).

A run of 3 helical transmembrane segments spans residues 14–34, 38–58, and 82–102; these read VMDL…VDSV, LVMP…NYFL, and GNFI…FLLI.

Belongs to the MscL family. In terms of assembly, homopentamer.

It localises to the cell inner membrane. Functionally, channel that opens in response to stretch forces in the membrane lipid bilayer. May participate in the regulation of osmotic pressure changes within the cell. The polypeptide is Large-conductance mechanosensitive channel (Rhizobium meliloti (strain 1021) (Ensifer meliloti)).